A 128-amino-acid chain; its full sequence is Iron-sulfur cluster insertion protein ErpA (128 aa).

Iron-sulfur cluster contacts are provided by cysteine 56, cysteine 120, and cysteine 122.

This sequence belongs to the HesB/IscA family. In terms of assembly, homodimer. Iron-sulfur cluster serves as cofactor.

In terms of biological role, required for insertion of 4Fe-4S clusters for at least IspG. In Xanthomonas euvesicatoria pv. vesicatoria (strain 85-10) (Xanthomonas campestris pv. vesicatoria), this protein is Iron-sulfur cluster insertion protein ErpA.